We begin with the raw amino-acid sequence, 134 residues long: Cytochrome b5 (134 aa).

At alanine 2 the chain carries N-acetylalanine. N6-acetyllysine is present on residues lysine 7, lysine 10, and lysine 19. The Cytochrome b5 heme-binding domain maps to 9-85 (VKYYTLEEIQ…SKTYIIGELH (77 aa)). Residues histidine 44 and histidine 68 each coordinate heme. A helical transmembrane segment spans residues 109 to 131 (WWTNWVIPAISALVVALMYRLYM).

The protein belongs to the cytochrome b5 family.

The protein localises to the endoplasmic reticulum membrane. The protein resides in the microsome membrane. Its function is as follows. Cytochrome b5 is a membrane-bound hemoprotein functioning as an electron carrier for several membrane-bound oxygenases. It is also involved in several steps of the sterol biosynthesis pathway, particularly in the C-6 double bond introduction during the C-6 desaturation. This Rattus norvegicus (Rat) protein is Cytochrome b5 (Cyb5a).